Consider the following 280-residue polypeptide: Thiamine-phosphate synthase (280 aa).

The interval 1 to 64 (MGWSGSPLTL…ATGRGGLRMT (64 aa)) is disordered. The span at 42-55 (GRGELRSRERRGEA) shows a compositional bias: basic and acidic residues. 4-amino-2-methyl-5-(diphosphooxymethyl)pyrimidine is bound by residues 104-108 (QLRCK) and N141. D142 and D161 together coordinate Mg(2+). S179 lines the 4-amino-2-methyl-5-(diphosphooxymethyl)pyrimidine pocket. 205-207 (TPT) is a binding site for 2-[(2R,5Z)-2-carboxy-4-methylthiazol-5(2H)-ylidene]ethyl phosphate. K208 is a binding site for 4-amino-2-methyl-5-(diphosphooxymethyl)pyrimidine. G236 is a 2-[(2R,5Z)-2-carboxy-4-methylthiazol-5(2H)-ylidene]ethyl phosphate binding site.

This sequence belongs to the thiamine-phosphate synthase family. It depends on Mg(2+) as a cofactor.

The catalysed reaction is 2-[(2R,5Z)-2-carboxy-4-methylthiazol-5(2H)-ylidene]ethyl phosphate + 4-amino-2-methyl-5-(diphosphooxymethyl)pyrimidine + 2 H(+) = thiamine phosphate + CO2 + diphosphate. It catalyses the reaction 2-(2-carboxy-4-methylthiazol-5-yl)ethyl phosphate + 4-amino-2-methyl-5-(diphosphooxymethyl)pyrimidine + 2 H(+) = thiamine phosphate + CO2 + diphosphate. The enzyme catalyses 4-methyl-5-(2-phosphooxyethyl)-thiazole + 4-amino-2-methyl-5-(diphosphooxymethyl)pyrimidine + H(+) = thiamine phosphate + diphosphate. It participates in cofactor biosynthesis; thiamine diphosphate biosynthesis; thiamine phosphate from 4-amino-2-methyl-5-diphosphomethylpyrimidine and 4-methyl-5-(2-phosphoethyl)-thiazole: step 1/1. Condenses 4-methyl-5-(beta-hydroxyethyl)thiazole monophosphate (THZ-P) and 2-methyl-4-amino-5-hydroxymethyl pyrimidine pyrophosphate (HMP-PP) to form thiamine monophosphate (TMP). This is Thiamine-phosphate synthase from Deinococcus radiodurans (strain ATCC 13939 / DSM 20539 / JCM 16871 / CCUG 27074 / LMG 4051 / NBRC 15346 / NCIMB 9279 / VKM B-1422 / R1).